Consider the following 377-residue polypeptide: Cytoplasmic tRNA 2-thiolation protein 1 (377 aa).

It belongs to the TtcA family. CTU1/NCS6/ATPBD3 subfamily.

It localises to the cytoplasm. It participates in tRNA modification; 5-methoxycarbonylmethyl-2-thiouridine-tRNA biosynthesis. Functionally, plays a central role in 2-thiolation of mcm(5)S(2)U at tRNA wobble positions of tRNA(Lys), tRNA(Glu) and tRNA(Gln). Directly binds tRNAs and probably acts by catalyzing adenylation of tRNAs, an intermediate required for 2-thiolation. It is unclear whether it acts as a sulfurtransferase that transfers sulfur from thiocarboxylated URM1 onto the uridine of tRNAs at wobble position. Prior mcm(5) tRNA modification by the elongator complex is required for 2-thiolation. May also be involved in protein urmylation. This is Cytoplasmic tRNA 2-thiolation protein 1 from Debaryomyces hansenii (strain ATCC 36239 / CBS 767 / BCRC 21394 / JCM 1990 / NBRC 0083 / IGC 2968) (Yeast).